The primary structure comprises 347 residues: Beta carbonic anhydrase 1, chloroplastic (347 aa).

The N-terminal 113 residues, 1-113 (MSTAPLSGFF…AAAKVEQITA (113 aa)), are a transit peptide targeting the chloroplast. Ala114 is subject to N-acetylalanine. At Ser175 the chain carries Phosphoserine. Tyr203 is modified (phosphotyrosine). A Phosphoserine modification is found at Ser266. S-nitrosocysteine is present on Cys280.

This sequence belongs to the beta-class carbonic anhydrase family. Homohexamer. S-nitrosylation at Cys-280 is up-regulated during nitrosative burst and suppresses both binding of salicylic acid and carbonic anhydrase activity. S-nitrosylated in response to an avirulent but not to a virulent bacterial strain. As to expression, strongly expressed in aerial tissues including leaves, stems, flowers and siliques. Accumulates in both guard cells and mesophyll cells.

The protein localises to the plastid. It is found in the chloroplast stroma. The protein resides in the cell membrane. It catalyses the reaction hydrogencarbonate + H(+) = CO2 + H2O. Functionally, reversible hydration of carbon dioxide. Required for photosynthesis in cotyledons. Binds salicylic acid. Together with BCA4, involved in the CO(2) signaling pathway which controls gas-exchange between plants and the atmosphere by modulating stomatal development and movements. Promotes water use efficiency. This Arabidopsis thaliana (Mouse-ear cress) protein is Beta carbonic anhydrase 1, chloroplastic.